Reading from the N-terminus, the 192-residue chain is Imidazoleglycerol-phosphate dehydratase (192 aa).

It belongs to the imidazoleglycerol-phosphate dehydratase family.

It is found in the cytoplasm. It catalyses the reaction D-erythro-1-(imidazol-4-yl)glycerol 3-phosphate = 3-(imidazol-4-yl)-2-oxopropyl phosphate + H2O. It functions in the pathway amino-acid biosynthesis; L-histidine biosynthesis; L-histidine from 5-phospho-alpha-D-ribose 1-diphosphate: step 6/9. This Staphylococcus epidermidis (strain ATCC 12228 / FDA PCI 1200) protein is Imidazoleglycerol-phosphate dehydratase.